We begin with the raw amino-acid sequence, 791 residues long: uncharacterized protein (791 aa).

A run of 4 helical transmembrane segments spans residues 104–124 (MWIL…FFLM), 131–151 (IAAI…YYII), 177–197 (ACLY…TLII), and 226–246 (WSGL…PSVL). N-linked (GlcNAc...) asparagine glycosylation is present at N265. 8 consecutive transmembrane segments (helical) span residues 274–294 (FFIV…IFPA), 309–329 (SAVL…PLTL), 346–366 (WATC…LPGL), 421–441 (FIIN…SFFL), 471–491 (VHWG…FAFT), 501–521 (SYGF…LSLI), 533–553 (AFFE…LLYF), and 583–603 (LVAA…SAVT). An N-linked (GlcNAc...) asparagine glycan is attached at N621. 3 consecutive transmembrane segments (helical) span residues 653–673 (FVMW…LLQI), 697–717 (SVTG…NYLI), and 733–753 (AAAM…CVVY). N-linked (GlcNAc...) asparagine glycosylation occurs at N759.

This sequence belongs to the oligopeptide OPT transporter family.

The protein resides in the membrane. This is an uncharacterized protein from Schizosaccharomyces pombe (strain 972 / ATCC 24843) (Fission yeast).